A 390-amino-acid polypeptide reads, in one-letter code: Transforming growth factor beta-1 proprotein (390 aa).

The first 29 residues, 1–29, serve as a signal peptide directing secretion; the sequence is MPPSGLRLLPLLLPLLWLLVLTPSRPAAG. A straightjacket domain region spans residues 30-74; the sequence is LSTCKTIDMELVKRKRIETIRGQILSKLRLASPPSQGEVPPGPLP. Positions 75-271 are arm domain; the sequence is EAVLALYNST…ATPLERAQHL (197 aa). N-linked (GlcNAc...) asparagine glycosylation is found at N82, N136, and N176. Residues 226-252 are bowtie tail; sequence DSKDNTLQVDINGFTTGRRGDLATIHG. Residues 244–246 carry the Cell attachment site motif; that stretch reads RGD. Disulfide bonds link C285-C294, C293-C356, C322-C387, and C326-C389.

The protein belongs to the TGF-beta family. In terms of assembly, homodimer; disulfide-linked. Interacts with the serine proteases, HTRA1 and HTRA3: the interaction with either inhibits TGFB1-mediated signaling and the HTRA protease activity is required for this inhibition. May interact with THSD4; this interaction may lead to sequestration by FBN1 microfibril assembly and attenuation of TGFB signaling. Interacts with CD109, DPT and ASPN. Interacts with EFEMP2. Interacts with TSKU; the interaction contributes to regulation of the hair cycle. Interacts with TGFBR3. Homodimer; disulfide-linked. Interacts with transforming growth factor beta-1 (TGF-beta-1) chain; interaction is non-covalent and maintains TGF-beta-1 in a latent state; each latency-associated peptide (LAP) monomer interacts with TGF-beta-1 in the other monomer. Interacts with LTBP1; leading to regulation of TGF-beta-1 activation. Interacts with LRRC32/GARP; leading to regulation of TGF-beta-1 activation on the surface of activated regulatory T-cells (Tregs). Interacts with LRRC33/NRROS; leading to regulation of TGF-beta-1 activation in macrophages and microglia. Interacts (via cell attachment site) with integrins ITGAV and ITGB6 (ITGAV:ITGB6), leading to release of the active TGF-beta-1. Interacts with NREP; the interaction results in a decrease in TGFB1 autoinduction. Interacts with HSP90AB1; inhibits latent TGFB1 activation. As to quaternary structure, homodimer; disulfide-linked. Interacts with TGF-beta receptors (TGFBR1 and TGFBR2), leading to signal transduction. Transforming growth factor beta-1 proprotein: The precursor proprotein is cleaved in the Golgi apparatus by FURIN to form Transforming growth factor beta-1 (TGF-beta-1) and Latency-associated peptide (LAP) chains, which remain non-covalently linked, rendering TGF-beta-1 inactive. In terms of processing, N-glycosylated. Deglycosylation leads to activation of Transforming growth factor beta-1 (TGF-beta-1); mechanisms triggering deglycosylation-driven activation of TGF-beta-1 are however unclear.

The protein resides in the secreted. It is found in the extracellular space. It localises to the extracellular matrix. Functionally, transforming growth factor beta-1 proprotein: Precursor of the Latency-associated peptide (LAP) and Transforming growth factor beta-1 (TGF-beta-1) chains, which constitute the regulatory and active subunit of TGF-beta-1, respectively. Required to maintain the Transforming growth factor beta-1 (TGF-beta-1) chain in a latent state during storage in extracellular matrix. Associates non-covalently with TGF-beta-1 and regulates its activation via interaction with 'milieu molecules', such as LTBP1, LRRC32/GARP and LRRC33/NRROS, that control activation of TGF-beta-1. Interaction with LRRC33/NRROS regulates activation of TGF-beta-1 in macrophages and microglia. Interaction with LRRC32/GARP controls activation of TGF-beta-1 on the surface of activated regulatory T-cells (Tregs). Interaction with integrins (ITGAV:ITGB6 or ITGAV:ITGB8) results in distortion of the Latency-associated peptide chain and subsequent release of the active TGF-beta-1. In terms of biological role, multifunctional protein that regulates the growth and differentiation of various cell types and is involved in various processes, such as normal development, immune function, microglia function and responses to neurodegeneration. Activation into mature form follows different steps: following cleavage of the proprotein in the Golgi apparatus, Latency-associated peptide (LAP) and Transforming growth factor beta-1 (TGF-beta-1) chains remain non-covalently linked rendering TGF-beta-1 inactive during storage in extracellular matrix. At the same time, LAP chain interacts with 'milieu molecules', such as LTBP1, LRRC32/GARP and LRRC33/NRROS that control activation of TGF-beta-1 and maintain it in a latent state during storage in extracellular milieus. TGF-beta-1 is released from LAP by integrins (ITGAV:ITGB6 or ITGAV:ITGB8): integrin-binding to LAP stabilizes an alternative conformation of the LAP bowtie tail and results in distortion of the LAP chain and subsequent release of the active TGF-beta-1. Once activated following release of LAP, TGF-beta-1 acts by binding to TGF-beta receptors (TGFBR1 and TGFBR2), which transduce signal. While expressed by many cells types, TGF-beta-1 only has a very localized range of action within cell environment thanks to fine regulation of its activation by Latency-associated peptide chain (LAP) and 'milieu molecules'. Plays an important role in bone remodeling: acts as a potent stimulator of osteoblastic bone formation, causing chemotaxis, proliferation and differentiation in committed osteoblasts. Can promote either T-helper 17 cells (Th17) or regulatory T-cells (Treg) lineage differentiation in a concentration-dependent manner. At high concentrations, leads to FOXP3-mediated suppression of RORC and down-regulation of IL-17 expression, favoring Treg cell development. At low concentrations in concert with IL-6 and IL-21, leads to expression of the IL-17 and IL-23 receptors, favoring differentiation to Th17 cells. Stimulates sustained production of collagen through the activation of CREB3L1 by regulated intramembrane proteolysis (RIP). Mediates SMAD2/3 activation by inducing its phosphorylation and subsequent translocation to the nucleus. Positively regulates odontoblastic differentiation in dental papilla cells, via promotion of IPO7-mediated translocation of phosphorylated SMAD2 to the nucleus and subsequent transcription of target genes. Can induce epithelial-to-mesenchymal transition (EMT) and cell migration in various cell types. The sequence is that of Transforming growth factor beta-1 proprotein (TGFB1) from Chlorocebus aethiops (Green monkey).